A 191-amino-acid chain; its full sequence is Peptidyl-tRNA hydrolase (191 aa).

Tyr17 contributes to the tRNA binding site. His22 acts as the Proton acceptor in catalysis. Tyr68, Asn70, and Asn116 together coordinate tRNA.

It belongs to the PTH family. As to quaternary structure, monomer.

It is found in the cytoplasm. The enzyme catalyses an N-acyl-L-alpha-aminoacyl-tRNA + H2O = an N-acyl-L-amino acid + a tRNA + H(+). Hydrolyzes ribosome-free peptidyl-tRNAs (with 1 or more amino acids incorporated), which drop off the ribosome during protein synthesis, or as a result of ribosome stalling. Functionally, catalyzes the release of premature peptidyl moieties from peptidyl-tRNA molecules trapped in stalled 50S ribosomal subunits, and thus maintains levels of free tRNAs and 50S ribosomes. The chain is Peptidyl-tRNA hydrolase from Mycobacterium ulcerans (strain Agy99).